Here is a 1149-residue protein sequence, read N- to C-terminus: cGMP-specific 3',5'-cyclic phosphodiesterase (1149 aa).

Composition is skewed to low complexity over residues 1-19 and 31-47; these read MHGTVSRSSSSSNMTDVSS and ATSSSTAATTSASASSS. Residues 1–175 are disordered; sequence MHGTVSRSSS…STTASQQDVD (175 aa). A compositionally biased stretch (polar residues) spans 48–59; the sequence is KPLTNGANKTAI. Positions 60 to 85 are enriched in low complexity; sequence STAAGVTPGAAPGPGCAAIPASGSSG. Positions 96-108 are enriched in polar residues; the sequence is QSNNNRPAGSNRS. The span at 132 to 158 shows a compositional bias: low complexity; the sequence is SSSSPSQSPSQSQSQSQASIQTQTSQQ. GAF domains follow at residues 278–430 and 462–643; these read DIDV…GIGI and NLEC…GLGI. One can recognise a PDEase domain in the interval 673–996; that stretch reads SQDQTEKLTQ…RNWQDLAEKV (324 aa). The active-site Proton donor is histidine 749. A divalent metal cation contacts are provided by histidine 753, histidine 789, aspartate 790, and aspartate 900. Disordered regions lie at residues 1037-1066 and 1096-1149; these read QQSQHGSEDSHTPEHQRSGSRLSMKKTGAL and SHVS…CALL. 2 stretches are compositionally biased toward basic and acidic residues: residues 1042-1053 and 1096-1106; these read GSEDSHTPEHQR and SHVSEDMDDKS. Low complexity predominate over residues 1115–1135; the sequence is ASGSMGRMSASSSTSSAGGQM. The span at 1139-1149 shows a compositional bias: basic residues; the sequence is SKKRSKLCALL. The residue at position 1146 (cysteine 1146) is a Cysteine methyl ester. Cysteine 1146 carries S-farnesyl cysteine lipidation. Residues 1147 to 1149 constitute a propeptide, removed in mature form; it reads ALL.

The protein belongs to the cyclic nucleotide phosphodiesterase family. In terms of assembly, interacts with PrBP. Requires a divalent metal cation as cofactor.

The protein localises to the cell membrane. It catalyses the reaction 3',5'-cyclic GMP + H2O = GMP + H(+). Functionally, has a role regulating cGMP transport in Malpighian tubule principal cells. The protein is cGMP-specific 3',5'-cyclic phosphodiesterase of Drosophila yakuba (Fruit fly).